The primary structure comprises 265 residues: uncharacterized protein (265 aa).

E47 is an active-site residue.

It belongs to the PhzF family.

This is an uncharacterized protein from Halalkalibacterium halodurans (strain ATCC BAA-125 / DSM 18197 / FERM 7344 / JCM 9153 / C-125) (Bacillus halodurans).